A 367-amino-acid polypeptide reads, in one-letter code: o-succinylbenzoate synthase (367 aa).

Lysine 164 acts as the Proton donor in catalysis. Mg(2+)-binding residues include aspartate 189, glutamate 214, and aspartate 239. The Proton acceptor role is filled by lysine 263.

This sequence belongs to the mandelate racemase/muconate lactonizing enzyme family. MenC type 2 subfamily. In terms of assembly, homodimer. The cofactor is a divalent metal cation.

The enzyme catalyses (1R,6R)-6-hydroxy-2-succinyl-cyclohexa-2,4-diene-1-carboxylate = 2-succinylbenzoate + H2O. The protein operates within quinol/quinone metabolism; 1,4-dihydroxy-2-naphthoate biosynthesis; 1,4-dihydroxy-2-naphthoate from chorismate: step 4/7. It participates in quinol/quinone metabolism; menaquinone biosynthesis. Its function is as follows. Converts 2-succinyl-6-hydroxy-2,4-cyclohexadiene-1-carboxylate (SHCHC) to 2-succinylbenzoate (OSB). Also acts as a N-succinylamino acid racemase (NSAR) that catalyzes the racemization of N-succinyl-L-phenylglycine. Since the gene is encoded in a menaquinone synthesis operon, OSB synthase is probably the physiological activity. A pathway that requires NSAR activity has not been identified in this species, so whether NSAR is also a biological activity is unknown. This is o-succinylbenzoate synthase from Enterococcus faecalis (strain ATCC 700802 / V583).